A 105-amino-acid polypeptide reads, in one-letter code: uncharacterized protein (105 aa).

The helical transmembrane segment at 4–26 (TQILLILFVGILVTTPHDIFIII) threads the bilayer.

Its subcellular location is the membrane. This is an uncharacterized protein from Rickettsia conorii (strain ATCC VR-613 / Malish 7).